A 412-amino-acid polypeptide reads, in one-letter code: Putative competence-damage inducible protein (412 aa).

Belongs to the CinA family.

The protein is Putative competence-damage inducible protein of Bacillus cereus (strain ZK / E33L).